Consider the following 335-residue polypeptide: Malate dehydrogenase 1 (335 aa).

Residues 11–16 (GAGNVG) and D35 each bind NAD(+). Substrate is bound by residues R97 and R103. NAD(+) contacts are provided by residues N110 and 133–135 (VTN). Positions 135 and 166 each coordinate substrate. Residue H190 is the Proton acceptor of the active site.

This sequence belongs to the LDH/MDH superfamily. MDH type 3 family.

The catalysed reaction is (S)-malate + NAD(+) = oxaloacetate + NADH + H(+). Its function is as follows. Catalyzes the reversible oxidation of malate to oxaloacetate. In Aquifex aeolicus (strain VF5), this protein is Malate dehydrogenase 1 (mdh1).